A 447-amino-acid chain; its full sequence is Probable glycine dehydrogenase (decarboxylating) subunit 1 (447 aa).

Belongs to the GcvP family. N-terminal subunit subfamily. In terms of assembly, the glycine cleavage system is composed of four proteins: P, T, L and H. In this organism, the P 'protein' is a heterodimer of two subunits.

The enzyme catalyses N(6)-[(R)-lipoyl]-L-lysyl-[glycine-cleavage complex H protein] + glycine + H(+) = N(6)-[(R)-S(8)-aminomethyldihydrolipoyl]-L-lysyl-[glycine-cleavage complex H protein] + CO2. Functionally, the glycine cleavage system catalyzes the degradation of glycine. The P protein binds the alpha-amino group of glycine through its pyridoxal phosphate cofactor; CO(2) is released and the remaining methylamine moiety is then transferred to the lipoamide cofactor of the H protein. The chain is Probable glycine dehydrogenase (decarboxylating) subunit 1 from Bacillus cereus (strain ATCC 10987 / NRS 248).